Reading from the N-terminus, the 120-residue chain is Glutamate--tRNA ligase (120 aa).

It belongs to the class-I aminoacyl-tRNA synthetase family. Glutamate--tRNA ligase type 1 subfamily. As to quaternary structure, monomer.

It localises to the cytoplasm. The enzyme catalyses tRNA(Glu) + L-glutamate + ATP = L-glutamyl-tRNA(Glu) + AMP + diphosphate. Its function is as follows. Catalyzes the attachment of glutamate to tRNA(Glu) in a two-step reaction: glutamate is first activated by ATP to form Glu-AMP and then transferred to the acceptor end of tRNA(Glu). This chain is Glutamate--tRNA ligase (gltX), found in Staphylococcus xylosus.